The chain runs to 159 residues: 2-C-methyl-D-erythritol 2,4-cyclodiphosphate synthase (159 aa).

A divalent metal cation-binding residues include Asp10 and His12. 4-CDP-2-C-methyl-D-erythritol 2-phosphate is bound by residues 10-12 (DVH) and 36-37 (HS). Residue His44 participates in a divalent metal cation binding. 4-CDP-2-C-methyl-D-erythritol 2-phosphate is bound by residues 58 to 60 (DIG), 63 to 67 (FPDTD), 102 to 108 (AQAPKMA), 134 to 137 (TTTE), Phe141, and Arg144.

This sequence belongs to the IspF family. In terms of assembly, homotrimer. It depends on a divalent metal cation as a cofactor.

It catalyses the reaction 4-CDP-2-C-methyl-D-erythritol 2-phosphate = 2-C-methyl-D-erythritol 2,4-cyclic diphosphate + CMP. The protein operates within isoprenoid biosynthesis; isopentenyl diphosphate biosynthesis via DXP pathway; isopentenyl diphosphate from 1-deoxy-D-xylulose 5-phosphate: step 4/6. In terms of biological role, involved in the biosynthesis of isopentenyl diphosphate (IPP) and dimethylallyl diphosphate (DMAPP), two major building blocks of isoprenoid compounds. Catalyzes the conversion of 4-diphosphocytidyl-2-C-methyl-D-erythritol 2-phosphate (CDP-ME2P) to 2-C-methyl-D-erythritol 2,4-cyclodiphosphate (ME-CPP) with a corresponding release of cytidine 5-monophosphate (CMP). This chain is 2-C-methyl-D-erythritol 2,4-cyclodiphosphate synthase, found in Idiomarina loihiensis (strain ATCC BAA-735 / DSM 15497 / L2-TR).